Here is a 197-residue protein sequence, read N- to C-terminus: Large ribosomal subunit protein eL15 (197 aa).

A compositionally biased stretch (basic residues) spans 163–172 (GKTSAGRKGR). Residues 163-197 (GKTSAGRKGRGMQTRGTGTEKTRPSVRSNLNRSKK) form a disordered region. A compositionally biased stretch (polar residues) spans 186–197 (PSVRSNLNRSKK).

This sequence belongs to the eukaryotic ribosomal protein eL15 family.

The sequence is that of Large ribosomal subunit protein eL15 from Methanococcoides burtonii (strain DSM 6242 / NBRC 107633 / OCM 468 / ACE-M).